The chain runs to 90 residues: Protein RL8A (90 aa).

Residues 15–34 (WTCEGLLLLLGLLVLFFHHH) traverse the membrane as a helical segment. The disordered stretch occupies residues 55-90 (HESGWYSSDDDGDRDGDEETGESHNRNSVGLSAVFS). The segment covering 62–74 (SDDDGDRDGDEET) has biased composition (acidic residues). The segment covering 80–90 (RNSVGLSAVFS) has biased composition (polar residues).

It localises to the host membrane. This is Protein RL8A (RL8A) from Homo sapiens (Human).